The sequence spans 665 residues: Soluble lamin-associated protein of 75 kDa (665 aa).

The interval 309-665 (AFASTSEGPE…GPGKKKAKLT (357 aa)) is disordered. The segment covering 311–326 (ASTSEGPEKTPVSTRT) has biased composition (polar residues). Residues 327 to 338 (RSSHLKRPKIGK) are compositionally biased toward basic residues. A phosphoserine mark is found at Ser348 and Ser377. Residues 376–397 (SSEEFLEEEPEQGVIDFEDESG) show a composition bias toward acidic residues. A compositionally biased stretch (basic and acidic residues) spans 412 to 421 (QKQDGDKDSA). A compositionally biased stretch (acidic residues) spans 440–451 (TEDEDSTSEGLE). Residues Ser447 and Ser512 each carry the phosphoserine modification. 2 stretches are compositionally biased toward polar residues: residues 521 to 533 (LGSS…VSNI) and 553 to 566 (VSQN…SSVE). Phosphoserine is present on residues Ser610, Ser613, and Ser630. Over residues 646 to 665 (NLRRKAKGHKGPGKKKAKLT) the composition is skewed to basic residues.

It belongs to the FAM169 family.

Its subcellular location is the nucleus envelope. The protein resides in the nucleus inner membrane. In Mus musculus (Mouse), this protein is Soluble lamin-associated protein of 75 kDa (Fam169a).